A 209-amino-acid chain; its full sequence is Uracil phosphoribosyltransferase (209 aa).

5-phospho-alpha-D-ribose 1-diphosphate contacts are provided by residues arginine 79, arginine 104, and 131 to 139 (DPMLATGGS). Residues isoleucine 194 and 199–201 (GDA) each bind uracil. A 5-phospho-alpha-D-ribose 1-diphosphate-binding site is contributed by aspartate 200.

It belongs to the UPRTase family. Requires Mg(2+) as cofactor.

It catalyses the reaction UMP + diphosphate = 5-phospho-alpha-D-ribose 1-diphosphate + uracil. It participates in pyrimidine metabolism; UMP biosynthesis via salvage pathway; UMP from uracil: step 1/1. Allosterically activated by GTP. Catalyzes the conversion of uracil and 5-phospho-alpha-D-ribose 1-diphosphate (PRPP) to UMP and diphosphate. In Lactobacillus gasseri (strain ATCC 33323 / DSM 20243 / BCRC 14619 / CIP 102991 / JCM 1131 / KCTC 3163 / NCIMB 11718 / NCTC 13722 / AM63), this protein is Uracil phosphoribosyltransferase.